Consider the following 418-residue polypeptide: Adenylosuccinate synthetase 2 (418 aa).

GTP-binding positions include 12–18 (GDEGKGR) and 40–42 (GHT). D13 serves as the catalytic Proton acceptor. Residues D13 and G40 each coordinate Mg(2+). Residues 13–16 (DEGK), 38–41 (NAGH), T127, K141, T239, and R301 contribute to the IMP site. H41 acts as the Proton donor in catalysis. 297–303 (AVTGRPR) provides a ligand contact to substrate. GTP contacts are provided by residues R303, 329 to 331 (KID), and 407 to 409 (SVG).

It belongs to the adenylosuccinate synthetase family. As to quaternary structure, homodimer. Mg(2+) serves as cofactor.

It is found in the cytoplasm. It carries out the reaction IMP + L-aspartate + GTP = N(6)-(1,2-dicarboxyethyl)-AMP + GDP + phosphate + 2 H(+). Its pathway is purine metabolism; AMP biosynthesis via de novo pathway; AMP from IMP: step 1/2. Its function is as follows. Plays an important role in the de novo pathway of purine nucleotide biosynthesis. Catalyzes the first committed step in the biosynthesis of AMP from IMP. The polypeptide is Adenylosuccinate synthetase 2 (Pseudoalteromonas translucida (strain TAC 125)).